Reading from the N-terminus, the 1960-residue chain is Transcription factor 20 (1960 aa).

Polar residues predominate over residues 1–18; sequence MQSFREQSSYHGNQQSYP. Positions 1–287 are disordered; the sequence is MQSFREQSSY…GSNAQAYGTQ (287 aa). Over residues 42-60 the composition is skewed to gly residues; it reads GGTGGSSGSSGSGSGGGRR. Arg60 carries the omega-N-methylarginine modification. Low complexity predominate over residues 61–75; sequence GAAAAAAAMASETSG. The span at 122–131 shows a compositional bias: polar residues; the sequence is QGSSFGNQYG. Over residues 164–192 the composition is skewed to low complexity; the sequence is SAQYQQQASSQQQQQQVQQLRQQLYQSHQ. A compositionally biased stretch (polar residues) spans 193 to 219; it reads PLPQATGQPASSSSHLQPMQRPSTLPS. A compositionally biased stretch (low complexity) spans 236 to 259; the sequence is QSSASSSSSSSFPSPQRFSQSGQS. 2 stretches are compositionally biased toward polar residues: residues 260–270 and 277–287; these read YDGSYNVNAGS and VGSNAQAYGTQ. Lys304 participates in a covalent cross-link: Glycyl lysine isopeptide (Lys-Gly) (interchain with G-Cter in SUMO2). Disordered regions lie at residues 305 to 328 and 360 to 392; these read IPQGTQQGQQQQQPQQQQHPSQHV and FHQNFSPISNPSPAASVVQSPSCSSTPSPLMQT. Low complexity-rich tracts occupy residues 306 to 322 and 368 to 388; these read PQGTQQGQQQQQPQQQQ and SNPSPAASVVQSPSCSSTPSP. Phosphoserine is present on residues Ser419 and Ser430. The segment at 476–748 is disordered; that stretch reads SDALTPQKKT…HGERKGRNEK (273 aa). 2 stretches are compositionally biased toward polar residues: residues 497-508 and 537-547; these read SCTNSEGSSQPE and LSGQSTSSDTT. 4 positions are modified to phosphoserine: Ser538, Ser559, Ser574, and Ser583. Lys602 carries the post-translational modification N6-acetyllysine. Residues 616–628 are compositionally biased toward basic and acidic residues; it reads RVEKPGGQDKGSQ. At Ser640 the chain carries Phosphoserine. Positions 665–677 are enriched in low complexity; the sequence is GNKNGDNNSNHNG. The segment covering 693–702 has biased composition (polar residues); that stretch reads TSRTEPSKSP. Residues Lys710, Lys733, Lys748, Lys823, Lys832, and Lys844 each participate in a glycyl lysine isopeptide (Lys-Gly) (interchain with G-Cter in SUMO2) cross-link. The span at 732–748 shows a compositional bias: basic and acidic residues; that stretch reads EKGDFTGHGERKGRNEK. A Phosphoserine modification is found at Ser871. Glycyl lysine isopeptide (Lys-Gly) (interchain with G-Cter in SUMO2) cross-links involve residues Lys920 and Lys922. Residues 920–1037 are disordered; sequence KLKSQSGQIK…GDPHHMNPHM (118 aa). A Glycyl lysine isopeptide (Lys-Gly) (interchain with G-Cter in SUMO1); alternate cross-link involves residue Lys929. Lys929 is covalently cross-linked (Glycyl lysine isopeptide (Lys-Gly) (interchain with G-Cter in SUMO2); alternate). Positions 936–945 are enriched in polar residues; it reads SKSQASFNNK. Positions 946–961 are enriched in basic and acidic residues; that stretch reads KSGDHCHPPSIKHESY. A Glycyl lysine isopeptide (Lys-Gly) (interchain with G-Cter in SUMO2) cross-link involves residue Lys957. Ser966 and Ser1005 each carry phosphoserine. A Glycyl lysine isopeptide (Lys-Gly) (interchain with G-Cter in SUMO2) cross-link involves residue Lys1015. Arg1024 is modified (omega-N-methylarginine). Ser1053 bears the Phosphoserine mark. Glycyl lysine isopeptide (Lys-Gly) (interchain with G-Cter in SUMO2) cross-links involve residues Lys1086, Lys1098, Lys1137, Lys1173, Lys1178, Lys1183, Lys1210, Lys1231, Lys1267, and Lys1274. 3 disordered regions span residues 1110–1142, 1162–1285, and 1303–1331; these read AAAQHRQEGPRKSPRQQQFLDRVRSPLKNDKDG, RCLM…GRLL, and SHSQDIKSIPKRDSSKDLPSPDSRNCPAV. Basic and acidic residues predominate over residues 1130-1142; it reads DRVRSPLKNDKDG. Positions 1170 to 1191 are leucine-zipper; it reads LPNKGMELKHGSQKLQESCWDL. The Nuclear localization signal signature appears at 1254–1268; it reads RRRVRSFISPIPSKR. The segment covering 1304-1318 has biased composition (basic and acidic residues); that stretch reads HSQDIKSIPKRDSSK. Residue Ser1305 is modified to Phosphoserine. Lys1309 is covalently cross-linked (Glycyl lysine isopeptide (Lys-Gly) (interchain with G-Cter in SUMO2)). Ser1335 carries the post-translational modification Phosphoserine. Lys1338 participates in a covalent cross-link: Glycyl lysine isopeptide (Lys-Gly) (interchain with G-Cter in SUMO2). Ser1361 carries the post-translational modification Phosphoserine. The tract at residues 1384 to 1607 is disordered; the sequence is DILSLKSGPP…TKQAVPIVEP (224 aa). Residues Lys1389, Lys1409, Lys1428, and Lys1446 each participate in a glycyl lysine isopeptide (Lys-Gly) (interchain with G-Cter in SUMO2) cross-link. The span at 1424 to 1451 shows a compositional bias: basic and acidic residues; it reads LHVEKPLPRSSEEWRGSVDDKVKTETHA. The segment covering 1464–1477 has biased composition (polar residues); it reads MTSTTSQKPGSNQG. Lys1510 participates in a covalent cross-link: Glycyl lysine isopeptide (Lys-Gly) (interchain with G-Cter in SUMO2). Ser1522 carries the phosphoserine modification. Residue Lys1524 forms a Glycyl lysine isopeptide (Lys-Gly) (interchain with G-Cter in SUMO2) linkage. Residues 1537–1551 constitute a DNA-binding region (a.T hook); sequence GKKKGRPIGSVNKQK. The span at 1555–1566 shows a compositional bias: pro residues; that stretch reads QPPPPPPQPPQI. Residues 1576 to 1600 carry the Nuclear localization signal motif; that stretch reads KPKKQRQRRERRKPGAQPRKRKTKQ. Basic residues predominate over residues 1578–1599; that stretch reads KKQRQRRERRKPGAQPRKRKTK. A Glycyl lysine isopeptide (Lys-Gly) (interchain with G-Cter in SUMO2) cross-link involves residue Lys1613. 2 disordered regions span residues 1660-1683 and 1732-1839; these read LVRGRKGQRSLTPPPSSTESKALP and TLPK…PELE. Ser1669 is modified (phosphoserine). A phosphothreonine mark is found at Thr1671, Thr1762, and Thr1764. The short motif at 1785–1792 is the Nuclear localization signal element; it reads RFKRRHRS. The C2HC pre-PHD-type; degenerate zinc-finger motif lies at 1829-1865; sequence PTTSEGGPELELQIPELPLDSNEFWVHEGCILWANGI. Residues 1885–1933 form a PHD-type zinc finger; sequence MKCSHCQEAGATLGCYNKGCSFRYHYPCAIDADCLLHEENFSVRCPKHK. The interval 1939 to 1960 is disordered; that stretch reads PLPPLQNKTAKGSLSTEQSERG. Positions 1944–1960 are enriched in polar residues; sequence QNKTAKGSLSTEQSERG.

As to quaternary structure, homodimer. Interacts with RNF4 and JUN. As to expression, expressed in most tissues, except in ovary and prostate. Isoform 1 is exclusively expressed in brain, heart and testis, and this form predominates in liver and kidney. Isoform 2 predominates in lung.

Its subcellular location is the nucleus. Its function is as follows. Transcriptional activator that binds to the regulatory region of MMP3 and thereby controls stromelysin expression. It stimulates the activity of various transcriptional activators such as JUN, SP1, PAX6 and ETS1, suggesting a function as a coactivator. This chain is Transcription factor 20 (TCF20), found in Homo sapiens (Human).